The following is a 53-amino-acid chain: Large ribosomal subunit protein bL32c (53 aa).

This sequence belongs to the bacterial ribosomal protein bL32 family.

It is found in the plastid. It localises to the chloroplast. This Coffea arabica (Arabian coffee) protein is Large ribosomal subunit protein bL32c.